The chain runs to 385 residues: Pre-mRNA-splicing factor slt-11 (385 aa).

Positions 157–233 are disordered; sequence RKGREVDEEG…PPGPKDWLPP (77 aa). Low complexity predominate over residues 171–187; it reads GSSSGAGRATGGNPAVG. The region spanning 239 to 312 is the RRM domain; that stretch reads MSLFVTGIED…CPLRVRWSVP (74 aa). Basic and acidic residues predominate over residues 320-331; the sequence is KEQRSEMLRDGR. The disordered stretch occupies residues 320–370; the sequence is KEQRSEMLRDGRSAFGSGQKTGGQKAIGGQNAQGGASGAQKDDASNLTIAA.

It belongs to the SLT11 family. As to quaternary structure, associated with the spliceosome.

It localises to the nucleus. Functionally, involved in pre-mRNA splicing. Facilitates the cooperative formation of U2/U6 helix II in association with stem II in the spliceosome. Binds to RNA. This chain is Pre-mRNA-splicing factor slt-11 (slt-11), found in Neurospora crassa (strain ATCC 24698 / 74-OR23-1A / CBS 708.71 / DSM 1257 / FGSC 987).